Here is a 146-residue protein sequence, read N- to C-terminus: COP9 signalosome complex subunit 9 (146 aa).

One can recognise a PCI domain in the interval 1 to 107 (MDSYKTQWLT…SVAREVKVLQ (107 aa)).

Component of a COP9 signalosome-like (CSN) complex.

It is found in the cytoplasm. Its subcellular location is the nucleus. In terms of biological role, component of the COP9 signalosome (CSN) complex that acts as a regulator of the ubiquitin (Ubl) conjugation pathway by mediating the deneddylation of the cullin subunit of SCF-type E3 ubiquitin-protein ligase complexes. The CSN complex is involved in the regulation of the mating pheromone response. This Candida glabrata (strain ATCC 2001 / BCRC 20586 / JCM 3761 / NBRC 0622 / NRRL Y-65 / CBS 138) (Yeast) protein is COP9 signalosome complex subunit 9 (CSN9).